A 348-amino-acid chain; its full sequence is Ileal sodium/bile acid cotransporter (348 aa).

Residues 1 to 28 (MDNSSVCPPNATVCEGDSCVVPESNFNA) are Extracellular-facing. Residues N3 and N10 are each glycosylated (N-linked (GlcNAc...) asparagine). Residues 29–49 (ILNTVMSTVLTILLAMVMFSM) traverse the membrane as a helical segment. Over 50-87 (GCNVEVHKFLGHIKRPWGIFVGFLCQFGIMPLTGFILS) the chain is Cytoplasmic. The chain crosses the membrane as a helical span at residues 88–108 (VASGILPVQAVVVLIMGCCPG). At 109-126 (GTGSNILAYWIDGDMDLS) the chain is on the extracellular side. A helical membrane pass occupies residues 127–147 (VSMTTCSTLLALGMMPLCLFV). Over 148–157 (YTKMWVDSGT) the chain is Cytoplasmic. The helical transmembrane segment at 158 to 178 (IVIPYDSIGISLVALVIPVSF) threads the bilayer. The Extracellular portion of the chain corresponds to 179–195 (GMFVNHKWPQKAKIILK). The helical transmembrane segment at 196-216 (IGSITGVILIVLIAVIGGILY) threads the bilayer. The Cytoplasmic portion of the chain corresponds to 217 to 224 (QSAWIIEP). A helical membrane pass occupies residues 225 to 245 (KLWIIGTIFPIAGYSLGFFLA). Topologically, residues 246-284 (RLAGQPWYRCRTVALETGMQNTQLCSTIVQLSFSPEDLN) are extracellular. The chain crosses the membrane as a helical span at residues 285-305 (LVFTFPLIYTVFQLVFAAVIL). Residues 306–348 (GIYVTYRKCYGKNDAEFLEKTDNEMDSRPSFDETNKGFQPDEK) are Cytoplasmic-facing. A disordered region spans residues 328–348 (NEMDSRPSFDETNKGFQPDEK). S335 is modified (phosphoserine).

It belongs to the bile acid:sodium symporter (BASS) (TC 2.A.28) family. Monomer and homodimer. As to expression, expressed in ileum.

Its subcellular location is the membrane. The enzyme catalyses taurocholate(out) + 2 Na(+)(out) = taurocholate(in) + 2 Na(+)(in). It carries out the reaction cholate(out) + 2 Na(+)(out) = cholate(in) + 2 Na(+)(in). It catalyses the reaction taurochenodeoxycholate(out) + 2 Na(+)(out) = taurochenodeoxycholate(in) + 2 Na(+)(in). The catalysed reaction is tauroursodeoxycholate(out) + 2 Na(+)(out) = tauroursodeoxycholate(in) + 2 Na(+)(in). The enzyme catalyses glycocholate(out) + 2 Na(+)(out) = glycocholate(in) + 2 Na(+)(in). It carries out the reaction tauronorcholate(out) + 2 Na(+)(out) = tauronorcholate(in) + 2 Na(+)(in). It catalyses the reaction tauroallocholate(out) + 2 Na(+)(out) = tauroallocholate(in) + 2 Na(+)(in). The catalysed reaction is taurodeoxycholate(out) + 2 Na(+)(out) = taurodeoxycholate(in) + 2 Na(+)(in). The enzyme catalyses tauro-beta-muricholate(out) + 2 Na(+)(out) = tauro-beta-muricholate(in) + 2 Na(+)(in). Plays a critical role in the sodium-dependent reabsorption of bile acids from the lumen of the small intestine. Transports various bile acids, unconjugated or conjugated, such as cholate and taurocholate. Also responsible for bile acid transport in the renal proximal tubules, a salvage mechanism that helps conserve bile acids. Works collaboratively with the Na(+)-taurocholate cotransporting polypeptide (NTCP), the organic solute transporter (OST), and the bile salt export pump (BSEP), to ensure efficacious biological recycling of bile acids during enterohepatic circulation. This chain is Ileal sodium/bile acid cotransporter (Slc10a2), found in Mus musculus (Mouse).